The primary structure comprises 1090 residues: UPF0507 protein C1Q_01007 (1090 aa).

The VPS9 domain maps to 289-436 (FSVNQLLTDF…FEDFNKNTGN (148 aa)).

Belongs to the UPF0507 family.

The chain is UPF0507 protein C1Q_01007 from Saccharomyces cerevisiae (strain JAY291) (Baker's yeast).